Here is a 169-residue protein sequence, read N- to C-terminus: Crossover junction endodeoxyribonuclease RuvC (169 aa).

Active-site residues include D11, E71, and D143. 3 residues coordinate Mg(2+): D11, E71, and D143.

Belongs to the RuvC family. In terms of assembly, homodimer which binds Holliday junction (HJ) DNA. The HJ becomes 2-fold symmetrical on binding to RuvC with unstacked arms; it has a different conformation from HJ DNA in complex with RuvA. In the full resolvosome a probable DNA-RuvA(4)-RuvB(12)-RuvC(2) complex forms which resolves the HJ. Requires Mg(2+) as cofactor.

The protein localises to the cytoplasm. It catalyses the reaction Endonucleolytic cleavage at a junction such as a reciprocal single-stranded crossover between two homologous DNA duplexes (Holliday junction).. Its function is as follows. The RuvA-RuvB-RuvC complex processes Holliday junction (HJ) DNA during genetic recombination and DNA repair. Endonuclease that resolves HJ intermediates. Cleaves cruciform DNA by making single-stranded nicks across the HJ at symmetrical positions within the homologous arms, yielding a 5'-phosphate and a 3'-hydroxyl group; requires a central core of homology in the junction. The consensus cleavage sequence is 5'-(A/T)TT(C/G)-3'. Cleavage occurs on the 3'-side of the TT dinucleotide at the point of strand exchange. HJ branch migration catalyzed by RuvA-RuvB allows RuvC to scan DNA until it finds its consensus sequence, where it cleaves and resolves the cruciform DNA. This Allorhizobium ampelinum (strain ATCC BAA-846 / DSM 112012 / S4) (Agrobacterium vitis (strain S4)) protein is Crossover junction endodeoxyribonuclease RuvC.